The primary structure comprises 494 residues: UDP-N-acetylmuramoyl-L-alanyl-D-glutamate--L-lysine ligase (494 aa).

Ser30 is a binding site for UDP-N-acetyl-alpha-D-muramoyl-L-alanyl-D-glutamate. 110-116 contributes to the ATP binding site; sequence GTNGKTS. UDP-N-acetyl-alpha-D-muramoyl-L-alanyl-D-glutamate is bound by residues 152 to 153, Ser179, and Arg187; that span reads TT. N6-carboxylysine is present on Lys219. The L-lysine recognition motif motif lies at 406 to 409; that stretch reads DNPA.

It belongs to the MurCDEF family. MurE subfamily. In terms of processing, carboxylation is probably crucial for Mg(2+) binding and, consequently, for the gamma-phosphate positioning of ATP.

It localises to the cytoplasm. It carries out the reaction UDP-N-acetyl-alpha-D-muramoyl-L-alanyl-D-glutamate + L-lysine + ATP = UDP-N-acetyl-alpha-D-muramoyl-L-alanyl-gamma-D-glutamyl-L-lysine + ADP + phosphate + H(+). The protein operates within cell wall biogenesis; peptidoglycan biosynthesis. Catalyzes the addition of L-lysine to the nucleotide precursor UDP-N-acetylmuramoyl-L-alanyl-D-glutamate (UMAG) in the biosynthesis of bacterial cell-wall peptidoglycan. In Staphylococcus haemolyticus (strain JCSC1435), this protein is UDP-N-acetylmuramoyl-L-alanyl-D-glutamate--L-lysine ligase.